Consider the following 497-residue polypeptide: MALWRGSAYAGFLALAVGCVFLLEPQLPGSALRSLWSSLQLGPAPAPPGVGSPEGRLAAAWDALIVRPARRWRRVAVGVNACVDVVLSGVKLLQALGLSPGNGKDHSELHSRNDLEEAFVHFMGKGAAAERFFSDKETFHDIAQVASEFPEAQHYVGGNAALIGQKFAANSDLKVLLCGPVGPKLHELLDDNVFVPPESLQEVDEFHLILEYQAGEEWDQLKAPHANRFIFSHDLSNGAMNMLEVFVSSLEEFQPDLVVLSGLHMMEGQSKEFQRKRLLEVVTSISDIPTGVPVHLELASMTNKELMSTIVHQQVFPAVTSLGLNEQELLFLSQSASGPHSSLSSWNGVPDVGVVSDILFWILKEHGKSESRASDLSRIHFHTLAYHILATVDGHWANQLAAVAAGARVAATQACATETIDTRRVSLKAPHEFMTSRLEAGSRVVLNPNEPVVEWHREGVSFHFTPVLVCKDPVRTVGLGDAISAEGLFYSEVHPHL.

A signal peptide spans 1 to 22 (MALWRGSAYAGFLALAVGCVFL). The 446-residue stretch at 52-497 (SPEGRLAAAW…LFYSEVHPHL (446 aa)) folds into the ADPK domain. 3 residues coordinate Mg(2+): E297, E328, and D481. D481 functions as the Proton acceptor in the catalytic mechanism.

Belongs to the ADP-dependent glucokinase family. Monomer. The cofactor is Mg(2+).

The protein localises to the secreted. It catalyses the reaction D-glucose + ADP = D-glucose 6-phosphate + AMP + H(+). It participates in carbohydrate degradation; glycolysis. In terms of biological role, catalyzes the phosphorylation of D-glucose to D-glucose 6-phosphate using ADP as the phosphate donor. GDP and CDP can replace ADP, but with reduced efficiency. The polypeptide is ADP-dependent glucokinase (ADPGK) (Bos taurus (Bovine)).